A 228-amino-acid chain; its full sequence is Endo-1,4-beta-xylanase A (228 aa).

Positions 1 to 27 are cleaved as a signal peptide; the sequence is MNLRKLRLLFVMCIGLTLILTAVPAHA. The GH11 domain occupies 29-222; it reads TITNNEMGNH…SSGSANVMTN (194 aa). Residue Glu-120 is the Nucleophile of the active site. Glu-209 functions as the Proton donor in the catalytic mechanism.

Belongs to the glycosyl hydrolase 11 (cellulase G) family.

It catalyses the reaction Endohydrolysis of (1-&gt;4)-beta-D-xylosidic linkages in xylans.. It functions in the pathway glycan degradation; xylan degradation. In Bacillus pumilus (Bacillus mesentericus), this protein is Endo-1,4-beta-xylanase A (xynA).